The primary structure comprises 195 residues: Probable DNA-directed RNA polymerase subunit delta (195 aa).

The region spanning 14–83 (LSMIEVARAI…GDNKWGLRSW (70 aa)) is the HTH HARE-type domain. Acidic residues-rich tracts occupy residues 119-138 (GDED…DSYE) and 145-195 (YDDE…GEEE). The segment at 119 to 195 (GDEDAIDYSD…SDDDAEGEEE (77 aa)) is disordered.

It belongs to the RpoE family. RNAP is composed of a core of 2 alpha, a beta and a beta' subunits. The core is associated with a delta subunit and one of several sigma factors.

Participates in both the initiation and recycling phases of transcription. In the presence of the delta subunit, RNAP displays an increased specificity of transcription, a decreased affinity for nucleic acids, and an increased efficiency of RNA synthesis because of enhanced recycling. The polypeptide is Probable DNA-directed RNA polymerase subunit delta (Streptococcus gordonii (strain Challis / ATCC 35105 / BCRC 15272 / CH1 / DL1 / V288)).